Consider the following 579-residue polypeptide: Probable receptor-like serine/threonine-protein kinase At5g57670 (579 aa).

At T256 the chain carries Phosphothreonine. Positions 267 to 542 (FHQGNIVGIG…LLTNGNEAEI (276 aa)) constitute a Protein kinase domain. ATP is bound by residues 273–281 (VGIGGYSEV) and K295. D392 functions as the Proton acceptor in the catalytic mechanism. Residue S396 is modified to Phosphoserine. Residue T432 is modified to Phosphothreonine.

It belongs to the protein kinase superfamily. Ser/Thr protein kinase family.

The enzyme catalyses L-seryl-[protein] + ATP = O-phospho-L-seryl-[protein] + ADP + H(+). It catalyses the reaction L-threonyl-[protein] + ATP = O-phospho-L-threonyl-[protein] + ADP + H(+). This is Probable receptor-like serine/threonine-protein kinase At5g57670 from Arabidopsis thaliana (Mouse-ear cress).